The sequence spans 335 residues: Dolichyl-diphosphooligosaccharide--protein glycosyltransferase subunit MAGT1 (335 aa).

The N-terminal stretch at 1–29 is a signal peptide; it reads MASPRWFWSVCAIAAVALLLVSKVPSASA. At 30–184 the chain is on the extracellular side; the sequence is QRKKEMVLSE…DVNIRVIRPP (155 aa). A Thioredoxin domain is found at 47–175; the sequence is WANKRPVIRM…IARWIADRTD (129 aa). An N-linked (GlcNAc...) asparagine glycan is attached at Asn-71. Cys-87 and Cys-90 form a disulfide bridge. Residues 185–205 form a helical membrane-spanning segment; the sequence is NYAGPLMLGLLLAVIGGLVYL. Residues 206-209 lie on the Cytoplasmic side of the membrane; sequence RRSN. A helical membrane pass occupies residues 210 to 230; the sequence is MEFLFNKTGWAFAALCFVLAM. Residues 231 to 270 lie on the Extracellular side of the membrane; the sequence is TSGQMWNHIRGPPYAHKNPHTGHVNYIHGSSQAQFVAETH. Residues 271–291 form a helical membrane-spanning segment; that stretch reads IVLLFNGGVTLGMVLLCEAAT. The Cytoplasmic segment spans residues 292–300; it reads SDMDIGKRR. A helical membrane pass occupies residues 301-321; the sequence is MMCIAGIGLVVLFFSWMLSIF. Over 322–335 the chain is Extracellular; the sequence is RSKYHGYPYSFLMS.

Belongs to the OST3/OST6 family. As to quaternary structure, accessory component of the STT3B-containing form of the oligosaccharyltransferase (OST) complex. OST exists in two different complex forms which contain common core subunits RPN1, RPN2, OST48, OST4, DAD1 and TMEM258, either STT3A or STT3B as catalytic subunits, and form-specific accessory subunits. OST can form stable complexes with the Sec61 complex or with both the Sec61 and TRAP complexes. The association of TUSC3 or MAGT1 with the STT3B-containing complex seems to be mutually exclusvice. As to expression, expressed at high levels in kidney, colon, heart and liver. Expressed at lower levels in intestine, spleen, brain and lung.

The protein resides in the cell membrane. The protein localises to the endoplasmic reticulum. It localises to the endoplasmic reticulum membrane. The protein operates within protein modification; protein glycosylation. Functionally, accessory component of the STT3B-containing form of the N-oligosaccharyl transferase (OST) complex which catalyzes the transfer of a high mannose oligosaccharide from a lipid-linked oligosaccharide donor to an asparagine residue within an Asn-X-Ser/Thr consensus motif in nascent polypeptide chains. Involved in N-glycosylation of STT3B-dependent substrates. Specifically required for the glycosylation of a subset of acceptor sites that are near cysteine residues; in this function seems to act redundantly with TUSC3. In its oxidized form proposed to form transient mixed disulfides with a glycoprotein substrate to facilitate access of STT3B to the unmodified acceptor site. Also has oxidoreductase-independent functions in the STT3B-containing OST complex possibly involving substrate recognition. Could indirectly play a role in Mg(2+) transport in epithelial cells. This chain is Dolichyl-diphosphooligosaccharide--protein glycosyltransferase subunit MAGT1, found in Mus musculus (Mouse).